The primary structure comprises 129 residues: Glycine cleavage system H protein (129 aa).

A Lipoyl-binding domain is found at 24–106 (LLKIGVSEFA…IGEGWLVILK (83 aa)). Lysine 65 carries the post-translational modification N6-lipoyllysine.

The protein belongs to the GcvH family. As to quaternary structure, the glycine cleavage system is composed of four proteins: P, T, L and H. It depends on (R)-lipoate as a cofactor.

In terms of biological role, the glycine cleavage system catalyzes the degradation of glycine. The H protein shuttles the methylamine group of glycine from the P protein to the T protein. This Prochlorococcus marinus (strain MIT 9312) protein is Glycine cleavage system H protein.